A 373-amino-acid chain; its full sequence is Glutamine synthetase (373 aa).

N-acetylalanine is present on alanine 2. The tract at residues 2 to 25 is required for glutamine-induced ubiquitination by CRL4(CRBN) and proteasomal degradation; sequence ATSASSHLNKGIKQVYMSLPQGEK. N6-acetyllysine is present on residues lysine 11 and lysine 14. A GS beta-grasp domain is found at 24–106; the sequence is EKVQAMYIWI…VFCEVFKYNR (83 aa). At tyrosine 104 the chain carries Phosphotyrosine. The region spanning 113-373 is the GS catalytic domain; it reads LRHTCKRIMD…TGDEPFQYKN (261 aa). Position 134 (glutamate 134) interacts with ATP. Glutamate 134, glutamate 136, glutamate 196, and glutamate 203 together coordinate Mn(2+). 203–208 contributes to the ATP binding site; that stretch reads EFQIGP. 246 to 247 contacts L-glutamate; the sequence is NW. Histidine 253 is a Mn(2+) binding site. ATP contacts are provided by residues 255-257, arginine 319, and arginine 324; that span reads NFS. Arginine 319 contributes to the L-glutamate binding site. 336-338 is an ADP binding site; sequence YFE. Glutamate 338 serves as a coordination point for Mn(2+). Arginine 340 is an L-glutamate binding site. Residue serine 343 is modified to Phosphoserine.

Belongs to the glutamine synthetase family. Decamer; composed of two pentamers. Interacts with PALMD. Interacts with RHOJ. Interacts with BEST2; this interaction tethers a fraction of GLUL to the membrane, causing a decrease of cytosolic glutamine synthase (GS) activity and inhibits the chloride channel activity of BEST2 by affecting the gating at the aperture in the absence of intracellular glutamate. The cofactor is Mg(2+). Requires Mn(2+) as cofactor. Post-translationally, palmitoylated; undergoes autopalmitoylation. Acetylated by EP300/p300; acetylation is stimulated by increased glutamine levels and promotes ubiquitin-mediated proteasomal degradation. In terms of processing, ubiquitinated by ZNRF1. Ubiquitinated by the DCX (DDB1-CUL4-X-box) E3 ubiquitin-protein ligase complex called CRL4(CRBN), leading to proteasomal degradation.

The protein resides in the cytoplasm. Its subcellular location is the cytosol. It localises to the microsome. It is found in the mitochondrion. The protein localises to the cell membrane. The enzyme catalyses L-glutamate + NH4(+) + ATP = L-glutamine + ADP + phosphate + H(+). The catalysed reaction is L-cysteinyl-[protein] + hexadecanoyl-CoA = S-hexadecanoyl-L-cysteinyl-[protein] + CoA. With respect to regulation, glutamine synthetase activity is inhibited by methionine sulfoximine (MSO). Its function is as follows. Glutamine synthetase that catalyzes the ATP-dependent conversion of glutamate and ammonia to glutamine. Its role depends on tissue localization: in the brain, it regulates the levels of toxic ammonia and converts neurotoxic glutamate to harmless glutamine, whereas in the liver, it is one of the enzymes responsible for the removal of ammonia. Plays a key role in ammonium detoxification during erythropoiesis: the glutamine synthetase activity is required to remove ammonium generated by porphobilinogen deaminase (HMBS) during heme biosynthesis to prevent ammonium accumulation and oxidative stress. Essential for proliferation of fetal skin fibroblasts. Independently of its glutamine synthetase activity, required for endothelial cell migration during vascular development. Involved in angiogenesis by regulating membrane localization and activation of the GTPase RHOJ, possibly by promoting RHOJ palmitoylation. May act as a palmitoyltransferase for RHOJ: able to autopalmitoylate and then transfer the palmitoyl group to RHOJ. Plays a role in ribosomal 40S subunit biogenesis. Through the interaction with BEST2, inhibits BEST2 channel activity by affecting the gating at the aperture in the absence of intracellular L-glutamate, but sensitizes BEST2 to intracellular L-glutamate, which promotes the opening of BEST2 and thus relieves its inhibitory effect on BEST2. The chain is Glutamine synthetase from Sus scrofa (Pig).